A 597-amino-acid polypeptide reads, in one-letter code: Arginine--tRNA ligase (597 aa).

The span at 23-32 (QAAAARQASQ) shows a compositional bias: low complexity. The tract at residues 23 to 43 (QAAAARQASQPLDPQLAPASK) is disordered. Positions 137-147 (PNIAKEMHVGH) match the 'HIGH' region motif.

This sequence belongs to the class-I aminoacyl-tRNA synthetase family. Monomer.

Its subcellular location is the cytoplasm. The catalysed reaction is tRNA(Arg) + L-arginine + ATP = L-arginyl-tRNA(Arg) + AMP + diphosphate. The sequence is that of Arginine--tRNA ligase from Synechococcus sp. (strain WH7803).